The chain runs to 683 residues: DNA ligase (683 aa).

NAD(+) is bound by residues 35–39 (DADYD), 84–85 (SL), and Glu115. Residue Lys117 is the N6-AMP-lysine intermediate of the active site. NAD(+)-binding residues include Arg138, Glu175, Lys293, and Lys317. Zn(2+) contacts are provided by Cys411, Cys414, Cys429, and Cys435. One can recognise a BRCT domain in the interval 598–683 (QTNSAVSGKT…LQNISTGAQQ (86 aa)).

This sequence belongs to the NAD-dependent DNA ligase family. LigA subfamily. Mg(2+) is required as a cofactor. Mn(2+) serves as cofactor.

It carries out the reaction NAD(+) + (deoxyribonucleotide)n-3'-hydroxyl + 5'-phospho-(deoxyribonucleotide)m = (deoxyribonucleotide)n+m + AMP + beta-nicotinamide D-nucleotide.. DNA ligase that catalyzes the formation of phosphodiester linkages between 5'-phosphoryl and 3'-hydroxyl groups in double-stranded DNA using NAD as a coenzyme and as the energy source for the reaction. It is essential for DNA replication and repair of damaged DNA. The sequence is that of DNA ligase from Nitrosomonas eutropha (strain DSM 101675 / C91 / Nm57).